Consider the following 120-residue polypeptide: Large ribosomal subunit protein bL19 (120 aa).

Belongs to the bacterial ribosomal protein bL19 family.

In terms of biological role, this protein is located at the 30S-50S ribosomal subunit interface and may play a role in the structure and function of the aminoacyl-tRNA binding site. The protein is Large ribosomal subunit protein bL19 of Marinomonas sp. (strain MWYL1).